A 228-amino-acid chain; its full sequence is 5'(3')-deoxyribonucleotidase, mitochondrial (228 aa).

The N-terminal 31 residues, 1 to 31 (MIRLGGWCARRLCSAAVPAGRRGAAGGLGLA), are a transit peptide targeting the mitochondrion. D41 functions as the Nucleophile in the catalytic mechanism. 2 residues coordinate Mg(2+): D41 and D43. D43 functions as the Proton donor in the catalytic mechanism. Substrate is bound by residues D43, F49, F75, W76, V77, W96, T130, and K165. Residue D176 coordinates Mg(2+).

It belongs to the 5'(3')-deoxyribonucleotidase family. As to quaternary structure, homodimer. Mg(2+) serves as cofactor. As to expression, highly expressed in heart, brain and skeletal muscle. Detected at very low levels in kidney and pancreas.

Its subcellular location is the mitochondrion. In terms of biological role, dephosphorylates specifically the 5' and 2'(3')-phosphates of uracil and thymine deoxyribonucleotides, and so protects mitochondrial DNA replication from excess dTTP. Has only marginal activity towards dIMP and dGMP. This Homo sapiens (Human) protein is 5'(3')-deoxyribonucleotidase, mitochondrial (NT5M).